The following is a 146-amino-acid chain: Cystatin-C (146 aa).

Residues 1 to 26 form the signal peptide; sequence MAGPLRAPLLLLAILAVALAVSPAAG. Serine 43 carries the post-translational modification Phosphoserine. Positions 81 to 85 match the Secondary area of contact motif; that stretch reads QIVAG. Intrachain disulfides connect cysteine 99–cysteine 109 and cysteine 123–cysteine 143.

This sequence belongs to the cystatin family.

It is found in the secreted. Functionally, as an inhibitor of cysteine proteinases, this protein is thought to serve an important physiological role as a local regulator of this enzyme activity. The protein is Cystatin-C (CST3) of Macaca mulatta (Rhesus macaque).